Reading from the N-terminus, the 797-residue chain is N-acetylneuraminate (7)9-O-acetyltransferase (797 aa).

Residues 1–18 (MAALAYNLGKREINHYFS) lie on the Cytoplasmic side of the membrane. Residues 19–39 (VRSAKVLALVAVLLLAACHLA) form a helical membrane-spanning segment. Residues 40-313 (SRRYRGNDSC…QPRPPLTLIQ (274 aa)) lie on the Lumenal side of the membrane. An N-linked (GlcNAc...) asparagine glycan is attached at asparagine 46. Serine 94 serves as the catalytic Acyl-ester intermediate. 2 N-linked (GlcNAc...) asparagine glycosylation sites follow: asparagine 175 and asparagine 187. Active-site residues include aspartate 270 and histidine 273. A helical transmembrane segment spans residues 314–334 (KLAACFFTLSIIGYFIFYVIH). The Cytoplasmic segment spans residues 335-363 (RNAHRKNKPCTDLESGEEKKNIINTPVSS). Residues 364 to 384 (LEILLQSFCKLGLIMAYFYMC) form a helical membrane-spanning segment. Residues 385–395 (DRANLFMKENK) lie on the Lumenal side of the membrane. A helical transmembrane segment spans residues 396–416 (FYTHSSFFIPIIYILVLGVFY). The Cytoplasmic portion of the chain corresponds to 417–439 (NENTKETKVLNREQTDEWKGWMQ). A helical membrane pass occupies residues 440 to 460 (LVILIYHISGASTFLPVYMHI). Residue arginine 461 is a topological domain, lumenal. A helical membrane pass occupies residues 462 to 482 (VLVAAYLFQTGYGHFSYFWIK). Residues 483–486 (GDFG) lie on the Cytoplasmic side of the membrane. A helical membrane pass occupies residues 487–507 (IHRVCQVLFRLNFLVVVLCIV). Over 508-513 (MDRPYQ) the chain is Lumenal. A helical transmembrane segment spans residues 514–534 (FYYFVPLVTVWFMVIYVTLAL). The Cytoplasmic segment spans residues 535–546 (WPQITQKKANGN). Residues 547 to 567 (FFWYLGLLLKLGLLLLCIWFL) form a helical membrane-spanning segment. The Lumenal portion of the chain corresponds to 568 to 599 (AYSQGAFEKIFSLWPLSKCFELEGSVYEWWFR). A helical membrane pass occupies residues 600–620 (WRLDRYVVFHGVLFAFIYLAL). The Cytoplasmic segment spans residues 621–638 (QRRQILSEGKGEPLFSNK). Residues 639–659 (ISNFLLFVSVVSFLTYSIWAS) form a helical membrane-spanning segment. Residues 660–671 (SCKNKAECNELH) are Lumenal-facing. A helical membrane pass occupies residues 672–692 (PSVSVVQIVAFILIRNIPGYA). The Cytoplasmic segment spans residues 693-698 (RSIYSS). A helical membrane pass occupies residues 699–719 (FFAWFGKISLELFICQYHIWL). The Lumenal segment spans residues 720–725 (AADTRG). Residues 726–746 (ILVLIPGNPTLNIIVSTFIFV) form a helical membrane-spanning segment. Topologically, residues 747–770 (CVAHEISQITTDLAQVVIPKDNPS) are cytoplasmic. Residues 771-791 (LFRRLACTIAFFGGVLILSSI) form a helical membrane-spanning segment. The Lumenal portion of the chain corresponds to 792–797 (QDKSRL).

This sequence belongs to the PC-esterase family. CASD1 subfamily. Post-translationally, N-glycosylated. As to expression, ubiquitously expressed.

Its subcellular location is the golgi apparatus membrane. The enzyme catalyses CMP-N-acetyl-beta-neuraminate + acetyl-CoA = CMP-N-acetyl-9-O-acetyl-beta-neuraminate + CoA. It carries out the reaction a ganglioside GD3 (d18:1(4E)) + acetyl-CoA = a ganglioside Ac-O-7-GD3(d18:1(4E)) + CoA. The catalysed reaction is CMP-N-acetyl-beta-neuraminate + acetyl-CoA = CMP-N-acetyl-7-O-acetyl-beta-neuraminate + CoA. Key enzyme in the biosynthesis of O-acetylated (O-Ac) sialoglycans such as gangliosides O-AcGD3 and O-AcGD2, which affect various processes such as cell-cell interactions, host-pathogen recognition. Catalyzes the transfer of an acetyl group from a donor, the acetyl-coenzyme-A molecule (acetyl-CoA), to the C7/8/9 OH-position of a sialic acid residue. The primary site of O-acetyl group transfer on sialic acid seems to depend on cell type and can be C7, from which the O-acetyl group could subsequently migrate to the C8 and then to the C9 position, or at C9 with possibility of migrating to the C8 and then to the C7 position. Together with ST8SIA1 (GD3 synthase) it increases the levels of ganglioside Ac-O-7-GD3. Can transfer the acetyl group from acetyl-CoA to free sialate (N-acetylneuraminate, Neu5Ac) in vitro, but has preferred substrate specificity for CMP-activated sialate (CMP-Neu5Ac), resulting in the formation of 9-O-acetylated CMP-Neu5Ac (CMP-Neu5,9Ac2). CMP-Neu5,9Ac2 may be used by sialyltransferases as a sialate donor for glycoconjugate acceptors such as ganglioside GD3. O-acetylation at position C9 of ganglioside GD3 can counteract the pro-apoptotic effects of the ganglioside GD3 in tumor cells. The sequence is that of N-acetylneuraminate (7)9-O-acetyltransferase from Mus musculus (Mouse).